The following is a 156-amino-acid chain: Putative pre-16S rRNA nuclease (156 aa).

It belongs to the YqgF nuclease family.

The protein localises to the cytoplasm. Functionally, could be a nuclease involved in processing of the 5'-end of pre-16S rRNA. The polypeptide is Putative pre-16S rRNA nuclease (Phenylobacterium zucineum (strain HLK1)).